A 512-amino-acid chain; its full sequence is Eukaryotic translation initiation factor 3 subunit L (512 aa).

The 187-residue stretch at 291–477 folds into the PCI domain; it reads DAFRLFESIL…GERQFTDSVD (187 aa).

It belongs to the eIF-3 subunit L family. As to quaternary structure, component of the eukaryotic translation initiation factor 3 (eIF-3) complex.

Its subcellular location is the cytoplasm. Component of the eukaryotic translation initiation factor 3 (eIF-3) complex, which is involved in protein synthesis of a specialized repertoire of mRNAs and, together with other initiation factors, stimulates binding of mRNA and methionyl-tRNAi to the 40S ribosome. The eIF-3 complex specifically targets and initiates translation of a subset of mRNAs involved in cell proliferation. This is Eukaryotic translation initiation factor 3 subunit L from Monosiga brevicollis (Choanoflagellate).